A 714-amino-acid chain; its full sequence is Elongation factor G-like protein (714 aa).

Residues 21 to 289 (GGVRNVVLVG…VATRGFPSPM (269 aa)) enclose the tr-type G domain. Residues 30–37 (GPSGGGKT) are G1. 30–37 (GPSGGGKT) serves as a coordination point for GTP. The interval 73 to 77 (QRSVG) is G2. The interval 94–97 (DTPG) is G3. Residues 94-98 (DTPGY) and 148-151 (TKLD) each bind GTP. The G4 stretch occupies residues 148–151 (TKLD). The G5 stretch occupies residues 267 to 269 (CSS).

The protein belongs to the TRAFAC class translation factor GTPase superfamily. Classic translation factor GTPase family. EF-G/EF-2 subfamily.

The protein is Elongation factor G-like protein of Mycobacterium tuberculosis (strain ATCC 25618 / H37Rv).